The sequence spans 349 residues: Mitomycin biosynthesis 6-O-methyltransferase (349 aa).

S-adenosyl-L-methionine-binding positions include S167, G190, 213–214 (ER), 240–241 (DF), and K255. H259 (proton acceptor) is an active-site residue. N288 serves as a coordination point for substrate.

This sequence belongs to the class I-like SAM-binding methyltransferase superfamily. Cation-independent O-methyltransferase family. COMT subfamily. Homodimer.

The catalysed reaction is 6-demethylmitomycin A + S-adenosyl-L-methionine = mitomycin A + S-adenosyl-L-homocysteine. It carries out the reaction 6-demethylmitomycin B + S-adenosyl-L-methionine = mitomycin B + S-adenosyl-L-homocysteine. Its activity is regulated as follows. Completely inhibited by Zn(2+) and Cu(2+). Functionally, involved in the biosynthesis of the quinone methoxy group present in the mitomycin A and B, which are used as anticancer agents. In vitro, catalyzes the 6-O-methylation of both C9-beta- and C9-alpha-configured 6-hydroxymitomycins via the transfer of the S-methyl group of S-adenosyl-L-methionine (AdoMet) to the 6-demethylmitomycin A and B. It can also use hydroxyquinone as substrate. This is Mitomycin biosynthesis 6-O-methyltransferase from Streptomyces lavendulae.